Here is a 243-residue protein sequence, read N- to C-terminus: MTNSSPRPSGRRADQLRDVRITRHYTKHAEGSVLVEFGETKVICTASVVERVPEFLRERGQGWLTAEYGMLPRATHTRSDREAARGKQTGRTQEIQRLIGRALRAVFDLNALGPRTLHLDCDVIQADGGTRTASITGAFVAAHDAVTKLVAAGKIARSPITDYVAAISVGVFGGAPVLDLDYDEDSACDTDMNVVMTGAGGFVEVQGTAEGVPFSRAEMNALLDLAQAGIGELVRLQRAALEA.

Residues Arg-91 and 129–131 (GTR) contribute to the phosphate site.

The protein belongs to the RNase PH family. As to quaternary structure, homohexameric ring arranged as a trimer of dimers.

It carries out the reaction tRNA(n+1) + phosphate = tRNA(n) + a ribonucleoside 5'-diphosphate. Its function is as follows. Phosphorolytic 3'-5' exoribonuclease that plays an important role in tRNA 3'-end maturation. Removes nucleotide residues following the 3'-CCA terminus of tRNAs; can also add nucleotides to the ends of RNA molecules by using nucleoside diphosphates as substrates, but this may not be physiologically important. Probably plays a role in initiation of 16S rRNA degradation (leading to ribosome degradation) during starvation. This chain is Ribonuclease PH, found in Burkholderia thailandensis (strain ATCC 700388 / DSM 13276 / CCUG 48851 / CIP 106301 / E264).